The following is a 572-amino-acid chain: Golgi apyrase (572 aa).

At 1-470 (MVRKYGIFID…KHWMRLFPNK (470 aa)) the chain is on the lumenal side. The Proton acceptor role is filled by Glu-145. Residues 471–491 (LFFILSFIFCLFFLFSLVLFG) form a helical membrane-spanning segment. Topologically, residues 492 to 572 (YDPKRRQRFK…RERTPRSPFP (81 aa)) are cytoplasmic.

The protein belongs to the GDA1/CD39 NTPase family. Ca(2+) serves as cofactor. The cofactor is Mg(2+). Mn(2+) is required as a cofactor.

The protein localises to the golgi apparatus. The protein resides in the membrane. It catalyses the reaction a ribonucleoside 5'-triphosphate + 2 H2O = a ribonucleoside 5'-phosphate + 2 phosphate + 2 H(+). It functions in the pathway protein modification; protein glycosylation. In terms of biological role, catalyzes the hydrolysis of phosphoanhydride bonds of nucleoside tri- and di-phosphates. Required for Golgi glycosylation and cell wall integrity. Involved in N-mannosylation of proteins in Golgi. This chain is Golgi apyrase, found in Schizosaccharomyces pombe (strain 972 / ATCC 24843) (Fission yeast).